The primary structure comprises 342 residues: uncharacterized protein (342 aa).

Arginine 69 is a substrate binding site. Catalysis depends on histidine 176, which acts as the Proton donor. Aspartate 240 lines the substrate pocket.

The protein belongs to the aldose epimerase family.

This is an uncharacterized protein from Saccharomyces cerevisiae (strain ATCC 204508 / S288c) (Baker's yeast).